The sequence spans 346 residues: Calcium homeostasis modulator protein 1 (346 aa).

At 1 to 21 the chain is on the cytoplasmic side; that stretch reads MMDKFRMIFQFLQSNQESFMN. The segment at 10–37 is central pore; that stretch reads QFLQSNQESFMNGICGIMALASAQMYSA. A helical membrane pass occupies residues 22 to 37; that stretch reads GICGIMALASAQMYSA. The Extracellular segment spans residues 38–49; that stretch reads FDFNCPCLPGYN. 2 cysteine pairs are disulfide-bonded: Cys42/Cys127 and Cys44/Cys161. The chain crosses the membrane as a helical span at residues 50 to 72; sequence AAYSAGILLAPPLVLFLLGLVMN. A phospholipid-binding region spans residues 63-70; that stretch reads VLFLLGLV. The Cytoplasmic segment spans residues 73–99; sequence NNVSMLAEEWKRPLGRRAKDPAVLRYM. The chain crosses the membrane as a helical span at residues 100–125; sequence FCSMAQRALIAPVVWVAVTLLDGKCF. Cys101 carries S-palmitoyl cysteine lipidation. The tract at residues 105-117 is phospholipid-binding; sequence QRALIAPVVWVAV. Topologically, residues 126–180 are extracellular; sequence LCAFCTAVPVSALGNGSLAPGLPAPELARLLARVPCPEIYDGDWLLAREVAVRYL. The N-linked (GlcNAc...) asparagine glycan is linked to Asn140. The chain crosses the membrane as a helical span at residues 181–206; that stretch reads RCISQALGWSFVLLTTLLAFVVRSVR. Positions 192–202 are phospholipid-binding; it reads VLLTTLLAFVV. The Cytoplasmic portion of the chain corresponds to 207–346; that stretch reads PCFTQAAFLK…KEVATYFSKV (140 aa). Cys208 carries the S-palmitoyl cysteine lipid modification. Positions 313 to 346 are disordered; the sequence is LRLGQEEPPLMGNGWAGGGPRPPRKEVATYFSKV.

The protein belongs to the CALHM family. Oligomerizes to form hexamers and octamers. Does not form gap junctions. Associates with CALHM3 as a pore-forming subunit in a hetero-hexameric channel complex. Post-translationally, N-glycosylated. Assembly with CALHM3 is associated with N-glycan remodeling and formation of hybrid complex- and high mannose-type glycochains. This N-glycan processing regulates channel trafficking and gating kinetics. In terms of processing, palmitoylated by ZDHHC3, ZDHHC20 and possibly ZDHHC7. Palmitoylation regulates voltage-dependent gating of the channel by shifting it toward more depolarized potentials. In terms of tissue distribution, predominantly expressed in adult brain. Detected also in retinoic acid-differentiated SH-SY5Y cells. Specifically expressed in circumvallate taste bud cells.

Its subcellular location is the cell membrane. It localises to the endoplasmic reticulum membrane. It is found in the basolateral cell membrane. It catalyses the reaction ATP(in) = ATP(out). It carries out the reaction Ca(2+)(in) = Ca(2+)(out). The enzyme catalyses Mg(2+)(in) = Mg(2+)(out). The catalysed reaction is Na(+)(in) = Na(+)(out). It catalyses the reaction K(+)(in) = K(+)(out). It carries out the reaction Li(+)(in) = Li(+)(out). The enzyme catalyses Rb(+)(in) = Rb(+)(out). The catalysed reaction is Cs(+)(in) = Cs(+)(out). It catalyses the reaction chloride(in) = chloride(out). With respect to regulation, regulated by membrane voltage and extracellular Ca(2+). Inhibited by Gd(3+), ruthenium red, and Zn(2+) and partially inhibited by 2-aminoethoxydiphenyl borate. In terms of biological role, pore-forming subunit of gustatory voltage-gated ion channels required for sensory perception of sweet, bitter and umami tastes. With CALHM3 forms a fast-activating voltage-gated ATP-release channel in type II taste bud cells, ATP acting as a neurotransmitter to activate afferent neural gustatory pathways. Acts both as a voltage-gated and calcium-activated ion channel: mediates neuronal excitability in response to membrane depolarization and low extracellular Ca(2+) concentration. Has poor ion selectivity and forms a wide pore (around 14 Angstroms) that mediates permeation of small ions including Ca(2+), Na(+), K(+) and Cl(-), as well as larger ions such as ATP(4-). Mediates Ca(2+) influx and downstream activation of the ERK1 and ERK2 cascade in neurons. Triggers endoplasmic reticulum stress by reducing the Ca(2+) content of the endoplasmic reticulum. May indirectly control amyloid precursor protein (APP) proteolysis and aggregated amyloid-beta (Abeta) peptides levels in a Ca(2+)-dependent manner. The protein is Calcium homeostasis modulator protein 1 of Homo sapiens (Human).